We begin with the raw amino-acid sequence, 78 residues long: MPRKPVRKVASTPRPNPLDQNGITYIDYKDTDLLRKFLSDRGKIRSRRVTRVTAQQQRLLARAVKNAREMALLPYSSR.

A disordered region spans residues 1–22 (MPRKPVRKVASTPRPNPLDQNG).

This sequence belongs to the bacterial ribosomal protein bS18 family. In terms of assembly, part of the 30S ribosomal subunit. Forms a tight heterodimer with protein bS6.

Binds as a heterodimer with protein bS6 to the central domain of the 16S rRNA, where it helps stabilize the platform of the 30S subunit. The sequence is that of Small ribosomal subunit protein bS18B from Streptomyces avermitilis (strain ATCC 31267 / DSM 46492 / JCM 5070 / NBRC 14893 / NCIMB 12804 / NRRL 8165 / MA-4680).